The following is a 308-amino-acid chain: Porphobilinogen deaminase (308 aa).

Position 243 is an S-(dipyrrolylmethanemethyl)cysteine (Cys-243).

Belongs to the HMBS family. In terms of assembly, monomer. It depends on dipyrromethane as a cofactor.

The enzyme catalyses 4 porphobilinogen + H2O = hydroxymethylbilane + 4 NH4(+). It participates in porphyrin-containing compound metabolism; protoporphyrin-IX biosynthesis; coproporphyrinogen-III from 5-aminolevulinate: step 2/4. Functionally, tetrapolymerization of the monopyrrole PBG into the hydroxymethylbilane pre-uroporphyrinogen in several discrete steps. This Nitrosomonas europaea (strain ATCC 19718 / CIP 103999 / KCTC 2705 / NBRC 14298) protein is Porphobilinogen deaminase.